Consider the following 125-residue polypeptide: Holo-[acyl-carrier-protein] synthase (125 aa).

The Mg(2+) site is built by Asp-8 and Glu-57.

It belongs to the P-Pant transferase superfamily. AcpS family. It depends on Mg(2+) as a cofactor.

The protein localises to the cytoplasm. It catalyses the reaction apo-[ACP] + CoA = holo-[ACP] + adenosine 3',5'-bisphosphate + H(+). Transfers the 4'-phosphopantetheine moiety from coenzyme A to a Ser of acyl-carrier-protein. This Thermus thermophilus (strain ATCC BAA-163 / DSM 7039 / HB27) protein is Holo-[acyl-carrier-protein] synthase.